Consider the following 879-residue polypeptide: Phosphoenolpyruvate carboxylase (879 aa).

Catalysis depends on residues H138 and K545.

Belongs to the PEPCase type 1 family. Mg(2+) serves as cofactor.

The catalysed reaction is oxaloacetate + phosphate = phosphoenolpyruvate + hydrogencarbonate. In terms of biological role, forms oxaloacetate, a four-carbon dicarboxylic acid source for the tricarboxylic acid cycle. This chain is Phosphoenolpyruvate carboxylase (ppc), found in Haemophilus influenzae (strain ATCC 51907 / DSM 11121 / KW20 / Rd).